The following is a 214-amino-acid chain: Homologous-pairing protein 2 homolog (214 aa).

Positions 79-147 (SDSELKDLDA…EHKLTNIKSA (69 aa)) form a coiled coil. Residues 115–179 (TSSLTTEEML…WKKRKRMATD (65 aa)) are DNA-binding.

This sequence belongs to the HOP2 family.

It localises to the nucleus. In terms of biological role, plays an important role in meiotic recombination. Stimulates DMC1-mediated strand exchange required for pairing of homologous chromosomes during meiosis. This is Homologous-pairing protein 2 homolog (psmc3ip) from Xenopus laevis (African clawed frog).